The sequence spans 213 residues: MDEKRVYITMYIKFAQKVLSLLSLKYASQKSVETYLYMFLYFGLGLRRNVTTLSLSQFDAKNLRFYPRPYAIYNDSPLYMIVPRHLVDIIVLYTRRFKIGLDQPLFRDIERPSVYERKIFEITGILPQDLVNACIATMIEYSKNPKQVARLLYLNKVYLDFIVRKLGFKLTNDFKLMTADGRILEPSPEVLHPFLYLAKKTKQQQEQGAGSLA.

This is an uncharacterized protein from Acidianus two-tailed virus (ATV).